The following is a 618-amino-acid chain: Grainyhead-like protein 1 homolog (618 aa).

The segment at 1–91 is transcription activation; sequence MTQEYDNKRP…EGEHPEPEHS (91 aa). Basic and acidic residues predominate over residues 76–92; it reads SSAVKPEGEHPEPEHSK. The disordered stretch occupies residues 76–100; sequence SSAVKPEGEHPEPEHSKRNSIPNVT. T208 bears the Phosphothreonine mark. The 227-residue stretch at 248–474 folds into the Grh/CP2 DB domain; sequence SGNNFEYTLE…DLDTQPVLFI (227 aa). 2 interaction with DNA regions span residues 380–389 and 427–430; these read TDFSSQKGVK and RKIR.

The protein belongs to the grh/CP2 family. Grainyhead subfamily. In terms of assembly, binds DNA as homodimer. Homodimer, also forms heterodimers with GRHL2 or GRHL3. Post-translationally, methylation at Arg-9 and Lys-116 may be involved in regulating transcriptional activation. In terms of tissue distribution, isoform 1 is highly expressed in brain, pancreas, tonsil, placenta and kidney. Isoform 2 is highly expressed in brain and liver. Expression in the skin is confined to the suprabasal layers of the epidermis and to the hair follicles.

It is found in the nucleus. Transcription factor involved in epithelial development. Binds directly to the consensus DNA sequence 5'-AACCGGTT-3'. Important regulator of DSG1 in the context of hair anchorage and epidermal differentiation, participates in the maintenance of the skin barrier. There is no genetic interaction with GRHL3, nor functional cooperativity due to diverse target gene selectivity during epithelia development. May play a role in regulating glucose homeostasis and insulin signaling. This chain is Grainyhead-like protein 1 homolog, found in Mus musculus (Mouse).